The sequence spans 70 residues: U2-agatoxin-Ao1p (70 aa).

The first 20 residues, 1 to 20 (MRAIISLILISAMVFSMIAA), serve as a signal peptide directing secretion. The propeptide occupies 21–34 (VPXXEGLQLSEDER). 3 disulfides stabilise this stretch: cysteine 37/cysteine 53, cysteine 44/cysteine 58, and cysteine 52/cysteine 68. Position 69 is a leucine amide (leucine 69).

The protein belongs to the neurotoxin 01 (U2-agtx) family. In terms of tissue distribution, expressed by the venom gland.

It is found in the secreted. Its function is as follows. Insect active toxin causing rapid but reversible paralysis in crickets. No activity shown in mammals. Does not show effect on mammalian voltage-gated calcium channels. This is U2-agatoxin-Ao1p from Agelena orientalis (Funnel-web spider).